We begin with the raw amino-acid sequence, 437 residues long: Epsilon-sarcoglycan (437 aa).

The Extracellular segment spans residues 1–317; that stretch reads MQLPRWWELG…LKSRDYYTDF (317 aa). A glycan (N-linked (GlcNAc...) asparagine) is linked at N200. A helical membrane pass occupies residues 318 to 338; that stretch reads LITLAVPSAVALVLFLILAYI. Over 339 to 437 the chain is Cytoplasmic; it reads MCCRREGVEK…QQQTTGKWYP (99 aa).

Belongs to the sarcoglycan alpha/epsilon family. In terms of processing, N-glycosylated. Post-translationally, ubiquitinated, leading to its degradation by the proteasome.

It is found in the cell membrane. It localises to the sarcolemma. The protein localises to the cytoplasm. Its subcellular location is the cytoskeleton. The protein resides in the cell projection. It is found in the dendrite. It localises to the golgi apparatus. Functionally, component of the sarcoglycan complex, a subcomplex of the dystrophin-glycoprotein complex which forms a link between the F-actin cytoskeleton and the extracellular matrix. The polypeptide is Epsilon-sarcoglycan (Pongo abelii (Sumatran orangutan)).